Here is a 650-residue protein sequence, read N- to C-terminus: Hemocyanin subunit 2 (650 aa).

2 O-linked (GalNAc...) serine glycosylation sites follow: S120 and S172. Cu cation is bound by residues H193, H197, and H225. N-linked (GlcNAc...) asparagine glycosylation occurs at N309. Cu cation is bound by residues H344, H348, and H384.

This sequence belongs to the tyrosinase family. Hemocyanin subfamily. In terms of assembly, hexamer of a number of different chains, of which five have been identified. Post-translationally, contains one N-glycosylated and three O-glycosylated residues. The position of one of the O-glycosylated residues has not been determined. O-linked glycan at Ser-120 may be composed of two GalNAc, three Gal, and two N-acetylneuraminic acid units for a total 1525-Da MW. Hemolymph.

The protein resides in the secreted. It is found in the extracellular space. In terms of biological role, hemocyanins are copper-containing oxygen carriers occurring freely dissolved in the hemolymph of many mollusks and arthropods. This Carcinus aestuarii (Green crab) protein is Hemocyanin subunit 2.